Consider the following 130-residue polypeptide: MAKTVKKSGPKKAKRNVPNGVAHIQSTFNNTIVSITDTAGEVISWSSAGASGFKGARKGTPFAAQTAAEAAARRALDQGMRQIEVLVRGPGSGRETAIRALQVAGLEITLIRDVTPLPHNGCRRPKRRRV.

The protein belongs to the universal ribosomal protein uS11 family. As to quaternary structure, part of the 30S ribosomal subunit. Interacts with proteins S7 and S18. Binds to IF-3.

Its function is as follows. Located on the platform of the 30S subunit, it bridges several disparate RNA helices of the 16S rRNA. Forms part of the Shine-Dalgarno cleft in the 70S ribosome. The protein is Small ribosomal subunit protein uS11 of Synechococcus sp. (strain CC9605).